Consider the following 97-residue polypeptide: HssA/B-like protein 48 (97 aa).

Disordered stretches follow at residues 1-20 and 78-97; these read MTLFASISSISNPSTSSKSS and GSGYPGNGGMGGGNGSCCGI.

This sequence belongs to the hssA/B family.

This is HssA/B-like protein 48 (hssl48) from Dictyostelium discoideum (Social amoeba).